The following is a 215-amino-acid chain: Sperm acrosome membrane-associated protein 3 (215 aa).

The Cytoplasmic portion of the chain corresponds to 1–63; sequence MVSALRGAPL…EARSRALRRR (63 aa). The chain crosses the membrane as a helical; Signal-anchor for type II membrane protein span at residues 64 to 84; that stretch reads WCPAGIMLLALVCLLSCLLPS. At 85–215 the chain is on the extracellular side; it reads SEAKLYGRCE…LTEWVDGCDF (131 aa). Residues 88-215 enclose the C-type lysozyme domain; it reads KLYGRCELAR…LTEWVDGCDF (128 aa). 4 cysteine pairs are disulfide-bonded: Cys93–Cys213, Cys117–Cys201, Cys151–Cys166, and Cys162–Cys180.

It belongs to the glycosyl hydrolase 22 family. Interacts with ASTL. In terms of processing, the processed form derives from the membrane form by proteolytic processing. The processed form is expressed in sperm (at protein level). Expressed in testis, epididymis and placenta.

The protein localises to the cytoplasmic vesicle. It is found in the secretory vesicle. Its subcellular location is the acrosome membrane. The protein resides in the secreted. Sperm surface membrane protein that may be involved in sperm-egg plasma membrane adhesion and fusion during fertilization. It could be a potential receptor for the egg oligosaccharide residue N-acetylglucosamine, which is present in the extracellular matrix over the egg plasma membrane. The processed form has no detectable bacteriolytic activity in vitro. This chain is Sperm acrosome membrane-associated protein 3 (SPACA3), found in Homo sapiens (Human).